Consider the following 85-residue polypeptide: Large ribosomal subunit protein bL27 (85 aa).

Residues 1–23 form a disordered region; sequence MAHKKGQGSTQNNRDSAGRRLGV.

It belongs to the bacterial ribosomal protein bL27 family.

The protein is Large ribosomal subunit protein bL27 of Aliarcobacter butzleri (strain RM4018) (Arcobacter butzleri).